Here is a 314-residue protein sequence, read N- to C-terminus: Ribosomal RNA small subunit methyltransferase H (314 aa).

S-adenosyl-L-methionine-binding positions include 35–37 (GGH), D55, F79, D101, and Q108.

Belongs to the methyltransferase superfamily. RsmH family.

The protein localises to the cytoplasm. The catalysed reaction is cytidine(1402) in 16S rRNA + S-adenosyl-L-methionine = N(4)-methylcytidine(1402) in 16S rRNA + S-adenosyl-L-homocysteine + H(+). In terms of biological role, specifically methylates the N4 position of cytidine in position 1402 (C1402) of 16S rRNA. The protein is Ribosomal RNA small subunit methyltransferase H of Pectobacterium carotovorum subsp. carotovorum (strain PC1).